Consider the following 82-residue polypeptide: Exodeoxyribonuclease 7 small subunit (82 aa).

This sequence belongs to the XseB family. As to quaternary structure, heterooligomer composed of large and small subunits.

The protein localises to the cytoplasm. It carries out the reaction Exonucleolytic cleavage in either 5'- to 3'- or 3'- to 5'-direction to yield nucleoside 5'-phosphates.. Its function is as follows. Bidirectionally degrades single-stranded DNA into large acid-insoluble oligonucleotides, which are then degraded further into small acid-soluble oligonucleotides. This Sodalis glossinidius (strain morsitans) protein is Exodeoxyribonuclease 7 small subunit.